Consider the following 249-residue polypeptide: Isoprenyl transferase (249 aa).

Aspartate 29 is a catalytic residue. Residue aspartate 29 participates in Mg(2+) binding. Substrate is bound by residues 30–33, tryptophan 34, arginine 42, histidine 46, and 74–76; these read GNGR and STE. The active-site Proton acceptor is the asparagine 77. Substrate-binding positions include tryptophan 78, arginine 80, arginine 197, and 203–205; that span reads RLS. Glutamate 216 contacts Mg(2+).

This sequence belongs to the UPP synthase family. As to quaternary structure, homodimer. Mg(2+) is required as a cofactor.

In terms of biological role, catalyzes the condensation of isopentenyl diphosphate (IPP) with allylic pyrophosphates generating different type of terpenoids. The protein is Isoprenyl transferase of Trichormus variabilis (strain ATCC 29413 / PCC 7937) (Anabaena variabilis).